The primary structure comprises 451 residues: Tubulin beta chain (451 aa).

The GTP site is built by glutamine 11, glutamate 69, serine 138, glycine 142, threonine 143, glycine 144, asparagine 204, and asparagine 226. Glutamate 69 lines the Mg(2+) pocket. Residues 426 to 451 form a disordered region; the sequence is QDATAEEEGEFDENEGAEGEEQPADY. The segment covering 429 to 451 has biased composition (acidic residues); it reads TAEEEGEFDENEGAEGEEQPADY.

This sequence belongs to the tubulin family. As to quaternary structure, dimer of alpha and beta chains. A typical microtubule is a hollow water-filled tube with an outer diameter of 25 nm and an inner diameter of 15 nM. Alpha-beta heterodimers associate head-to-tail to form protofilaments running lengthwise along the microtubule wall with the beta-tubulin subunit facing the microtubule plus end conferring a structural polarity. Microtubules usually have 13 protofilaments but different protofilament numbers can be found in some organisms and specialized cells. The cofactor is Mg(2+).

The protein localises to the cytoplasm. The protein resides in the cytoskeleton. Tubulin is the major constituent of microtubules, a cylinder consisting of laterally associated linear protofilaments composed of alpha- and beta-tubulin heterodimers. Microtubules grow by the addition of GTP-tubulin dimers to the microtubule end, where a stabilizing cap forms. Below the cap, tubulin dimers are in GDP-bound state, owing to GTPase activity of alpha-tubulin. This Naegleria pringsheimi (Amoeba) protein is Tubulin beta chain.